Consider the following 549-residue polypeptide: GATA-type transcription factor sreA (549 aa).

The interval 40-100 (AQAGREHPQD…TSPKSQKDTS (61 aa)) is disordered. 2 stretches are compositionally biased toward basic and acidic residues: residues 43–72 (GREH…HEGE) and 86–97 (HHVEKTSPKSQK). A GATA-type 1 zinc finger spans residues 106-130 (CSNCGTKSTPLWRRSPTGAMICNAC). Residues 141–174 (RPTKRNRTQASPEAYHPQNQSVGSQPDPAVTGSE) form a disordered region. Residues 180-198 (CPGGGNCNGTGGAEGCDGC) form a cystein-rich region (CRR) region. The segment at 223 to 244 (GNSDAVPSPEAEAPARNSGQPE) is disordered. The segment at 251-275 (CQNCGTTVTPLWRRDENGHPICNAC) adopts a GATA-type 2 zinc-finger fold. 3 disordered regions span residues 306–332 (RENS…PATL), 375–459 (NSGA…RLSS), and 482–535 (LGRQ…MREQ). The span at 309-331 (SPTAATHSSHGSSASPEASSPAT) shows a compositional bias: low complexity. Residues 383 to 396 (HHPPPPRLLEPGHP) show a composition bias toward pro residues. Residues 485–497 (QQQSQPHHPQSSP) are compositionally biased toward low complexity. Residues 498-515 (LAPTQAASQSLPGVSNMD) show a composition bias toward polar residues. A coiled-coil region spans residues 511 to 549 (VSNMDNHVEDRRAKLQREAEEMREQLRAKERELAELAGQ). Residues 516–535 (NHVEDRRAKLQREAEEMREQ) show a composition bias toward basic and acidic residues.

Its subcellular location is the nucleus. In terms of biological role, GATA-type transcription repressor that regulates iron- acquisition genes through specific binding GATA sequence elements of target promoters. Iron acquisition regulation is critical for survival under both iron-limiting conditions (to acquire essential iron) and iron-replete conditions (to limit iron toxicity). SreA targets include genes encoding a number of key iron-regulated factors such as those involved in siderophore biosynthesis. This chain is GATA-type transcription factor sreA, found in Emericella nidulans (strain FGSC A4 / ATCC 38163 / CBS 112.46 / NRRL 194 / M139) (Aspergillus nidulans).